A 336-amino-acid chain; its full sequence is Cytoskeleton protein RodZ (336 aa).

Residues 1 to 111 lie on the Cytoplasmic side of the membrane; that stretch reads MNTEATHDKT…LGKRRKKRDG (111 aa). Residues 19–71 form the HTH cro/C1-type domain; sequence LRNAREQLGLSQQAVAERLCLKVSTVRDIEEDKAPADLASTFLRGYIRSYAKL. A DNA-binding region (H-T-H motif) is located at residues 30–49; it reads QQAVAERLCLKVSTVRDIEE. Residues 112–132 form a helical; Signal-anchor for type II membrane protein membrane-spanning segment; the sequence is WLMSFTWLVLFVVIGLTGAWW. At 133–336 the chain is on the periplasmic side; that stretch reads WQNHKAQQEE…TVSAEQSAAQ (204 aa). Positions 152–164 are enriched in low complexity; it reads AALNNSGNNGAQS. Positions 152 to 235 are disordered; that stretch reads AALNNSGNNG…TTTGNVNVTQ (84 aa). Composition is skewed to polar residues over residues 165–190 and 200–217; these read VPLNTDSASTSSEPQTAETDSQTVEP and PDQTAAQNAVVSPSQANV. A compositionally biased stretch (low complexity) spans 220–235; that stretch reads APAVTPTTTGNVNVTQ.

Belongs to the RodZ family.

The protein resides in the cell inner membrane. Its function is as follows. Cytoskeletal protein that is involved in cell-shape control through regulation of the length of the long axis. This Enterobacter sp. (strain 638) protein is Cytoskeleton protein RodZ.